The sequence spans 330 residues: MENEEEIFKKLLKKASASSFEKIINLDLNNCSVDFNKYVLLLPKLINLKCLILSNNNTNQLPPFENLQSLEELYLRNFSVTPQQINKTSLSTDSDLTKSFITKIKTLTKLKHLVITGTKFDTNSSKDYIIHYLTTLETLNFERITNEKRQDVNNRIKLIREKHLINKSPTSAKILTTPNKTVVNRQQPQDLSTKKLVNTTSSIINISKSTPNKLQNQVQSSPKLSSPITKNKEQIVSTTSPQKLNNKVDFKLPPQIIDRNSPKHQPKIQSDVSSPLPIEIIPNIIEKTSDRLNGQSNLIQAISLLIGSITTLNDIDFIEDILYERKKILK.

The interval 212-240 is disordered; the sequence is NKLQNQVQSSPKLSSPITKNKEQIVSTTS. The span at 214–240 shows a compositional bias: polar residues; that stretch reads LQNQVQSSPKLSSPITKNKEQIVSTTS.

The sequence is that of Putative protein DDB_G0285185 from Dictyostelium discoideum (Social amoeba).